Here is a 450-residue protein sequence, read N- to C-terminus: Na(+)/H(+) antiporter NhaA 1 (450 aa).

The next 11 helical transmembrane spans lie at 35–55, 79–99, 117–137, 143–163, 173–193, 198–218, 224–244, 320–340, 356–376, 392–412, and 423–443; these read SSLFLLFATIIALWWANSDYA, LKHIINDGLMVIFFFLLGLEI, LIICAMGGMVCPALIYSGFNW, IGWGIPMATDTAFALGVLTMV, AFIVGLAIVDDVGAILVIAIF, ISLMHLLSACALIGFLGVANY, PLFYFIIGVAAWWAMLKSGVH, LPVVLFILPLFALANAGVVIN, IISGLILGKLIGISGACWFAL, VIGASLIAGIGFTMSTFIATL, and VAKTSILLASVLTAILGLLYL.

It belongs to the NhaA Na(+)/H(+) (TC 2.A.33) antiporter family.

It is found in the cell inner membrane. The catalysed reaction is Na(+)(in) + 2 H(+)(out) = Na(+)(out) + 2 H(+)(in). Functionally, na(+)/H(+) antiporter that extrudes sodium in exchange for external protons. The sequence is that of Na(+)/H(+) antiporter NhaA 1 from Shewanella denitrificans (strain OS217 / ATCC BAA-1090 / DSM 15013).